The following is a 204-amino-acid chain: NAD(P)H dehydrogenase (quinone) FQR1 (204 aa).

Residues 5–192 (VYIVYYSMYG…QQAFHQGQYI (188 aa)) enclose the Flavodoxin-like domain. FMN contacts are provided by residues 11–15 (SMYGH), 112–165 (IFYS…SPYG), and H136. An NAD(+)-binding site is contributed by Y13.

The protein belongs to the WrbA family. FMN serves as cofactor.

It localises to the cell membrane. The catalysed reaction is a quinone + NADH + H(+) = a quinol + NAD(+). It carries out the reaction a quinone + NADPH + H(+) = a quinol + NADP(+). Functionally, catalyzes the transfer of electrons from NADH and NADPH to several quinones in vitro. May act as detoxification enzyme, and protect against auxin-induced oxidative stress. This Arabidopsis thaliana (Mouse-ear cress) protein is NAD(P)H dehydrogenase (quinone) FQR1.